Here is a 298-residue protein sequence, read N- to C-terminus: Isochorismatase domain-containing protein 1 (298 aa).

A Phosphotyrosine modification is found at Tyr-160. Lys-279 is modified (N6-succinyllysine).

It belongs to the isochorismatase family.

The protein is Isochorismatase domain-containing protein 1 (ISOC1) of Bos taurus (Bovine).